The chain runs to 47 residues: Variabilin (47 aa).

Positions 32 to 34 (RGD) match the Cell attachment site motif.

Post-translationally, contains 2 disulfide bonds. In terms of tissue distribution, expressed in salivary glands.

It is found in the secreted. Functionally, potently inhibits platelet aggregation induced by ADP (IC(50)=157 nM, complete inhibition at 514 nM). Also inhibits platelet aggregation induced by collagen and by the thrombin receptor peptide SFLLRNP. Is a potent antagonist of the fibrinogen receptor glycoprotein IIb-IIIa (ITGA2B/ITGB3) and the vitronectin receptor alpha-v/beta-3 (ITGAV/ITGB3). This Dermacentor variabilis (American dog tick) protein is Variabilin.